A 437-amino-acid polypeptide reads, in one-letter code: GTPase Obg (437 aa).

The 159-residue stretch at 2-160 folds into the Obg domain; that stretch reads SMFLDTAKIS…RQLELELKIL (159 aa). Residues 161-338 enclose the OBG-type G domain; sequence ADVGLVGFPS…LLEATAELLA (178 aa). Residues 167–174, 192–196, 214–217, 284–287, and 319–321 each bind GTP; these read GFPSVGKS, FTTIV, DLPG, NKMD, and SSL. Positions 174 and 194 each coordinate Mg(2+). Residues 359–437 form the OCT domain; the sequence is GFAEAEKEFE…IGKFEFEFVD (79 aa).

It belongs to the TRAFAC class OBG-HflX-like GTPase superfamily. OBG GTPase family. Monomer. Mg(2+) is required as a cofactor.

It is found in the cytoplasm. Its function is as follows. An essential GTPase which binds GTP, GDP and possibly (p)ppGpp with moderate affinity, with high nucleotide exchange rates and a fairly low GTP hydrolysis rate. Plays a role in control of the cell cycle, stress response, ribosome biogenesis and in those bacteria that undergo differentiation, in morphogenesis control. The chain is GTPase Obg from Streptococcus pyogenes serotype M3 (strain ATCC BAA-595 / MGAS315).